The following is a 176-amino-acid chain: NAD(P)H-quinone oxidoreductase subunit 6, chloroplastic (176 aa).

Helical transmembrane passes span 10–30, 32–52, 61–81, 92–112, and 152–172; these read FLLV…VLLP, PIYS…FYIL, AQLL…VMFM, LWTV…ISLI, and FFLP…GAIA.

Belongs to the complex I subunit 6 family. As to quaternary structure, NDH is composed of at least 16 different subunits, 5 of which are encoded in the nucleus.

The protein localises to the plastid. The protein resides in the chloroplast thylakoid membrane. The enzyme catalyses a plastoquinone + NADH + (n+1) H(+)(in) = a plastoquinol + NAD(+) + n H(+)(out). It catalyses the reaction a plastoquinone + NADPH + (n+1) H(+)(in) = a plastoquinol + NADP(+) + n H(+)(out). NDH shuttles electrons from NAD(P)H:plastoquinone, via FMN and iron-sulfur (Fe-S) centers, to quinones in the photosynthetic chain and possibly in a chloroplast respiratory chain. The immediate electron acceptor for the enzyme in this species is believed to be plastoquinone. Couples the redox reaction to proton translocation, and thus conserves the redox energy in a proton gradient. The sequence is that of NAD(P)H-quinone oxidoreductase subunit 6, chloroplastic (ndhG) from Solanum lycopersicum (Tomato).